The chain runs to 355 residues: Probable dual-specificity RNA methyltransferase RlmN (355 aa).

The disordered stretch occupies residues 1–20; sequence MSATPVTQLTPSSQPQQPCS. Glu107 acts as the Proton acceptor in catalysis. One can recognise a Radical SAM core domain in the interval 113-341; the sequence is TDKRLTVCVS…VSVRYSRGLE (229 aa). The cysteines at positions 120 and 346 are disulfide-linked. Cys127, Cys131, and Cys134 together coordinate [4Fe-4S] cluster. Residues 174 to 175, Ser204, 227 to 229, and Asn303 contribute to the S-adenosyl-L-methionine site; these read GE and SLH. Cys346 acts as the S-methylcysteine intermediate in catalysis.

Belongs to the radical SAM superfamily. RlmN family. [4Fe-4S] cluster serves as cofactor.

It is found in the cytoplasm. It catalyses the reaction adenosine(2503) in 23S rRNA + 2 reduced [2Fe-2S]-[ferredoxin] + 2 S-adenosyl-L-methionine = 2-methyladenosine(2503) in 23S rRNA + 5'-deoxyadenosine + L-methionine + 2 oxidized [2Fe-2S]-[ferredoxin] + S-adenosyl-L-homocysteine. The enzyme catalyses adenosine(37) in tRNA + 2 reduced [2Fe-2S]-[ferredoxin] + 2 S-adenosyl-L-methionine = 2-methyladenosine(37) in tRNA + 5'-deoxyadenosine + L-methionine + 2 oxidized [2Fe-2S]-[ferredoxin] + S-adenosyl-L-homocysteine. Functionally, specifically methylates position 2 of adenine 2503 in 23S rRNA and position 2 of adenine 37 in tRNAs. In Nostoc sp. (strain PCC 7120 / SAG 25.82 / UTEX 2576), this protein is Probable dual-specificity RNA methyltransferase RlmN.